The sequence spans 547 residues: Probable bifunctional tRNA threonylcarbamoyladenosine biosynthesis protein (547 aa).

The segment at 1–329 is kae1; it reads MDTSKDLICI…YRSDMVEVNW (329 aa). Fe cation-binding residues include histidine 112, histidine 116, and tyrosine 133. Residues 133–137, aspartate 165, glycine 178, glutamate 182, and asparagine 262 contribute to the L-threonylcarbamoyladenylate site; that span reads YVSGG. A Fe cation-binding site is contributed by aspartate 290. Residues 346–547 form the Protein kinase domain; sequence IIPEHLIGKG…KEVEKRARYL (202 aa). Residues 352–360 and lysine 373 contribute to the ATP site; that span reads IGKGAEADI. The active-site Proton acceptor; for kinase activity is the aspartate 465.

This sequence in the N-terminal section; belongs to the KAE1 / TsaD family. The protein in the C-terminal section; belongs to the protein kinase superfamily. Tyr protein kinase family. BUD32 subfamily. Component of the KEOPS complex that consists of Kae1, Bud32, Cgi121 and Pcc1; the whole complex dimerizes. Requires Fe(2+) as cofactor.

It is found in the cytoplasm. It catalyses the reaction L-seryl-[protein] + ATP = O-phospho-L-seryl-[protein] + ADP + H(+). The enzyme catalyses L-threonyl-[protein] + ATP = O-phospho-L-threonyl-[protein] + ADP + H(+). It carries out the reaction L-threonylcarbamoyladenylate + adenosine(37) in tRNA = N(6)-L-threonylcarbamoyladenosine(37) in tRNA + AMP + H(+). Required for the formation of a threonylcarbamoyl group on adenosine at position 37 (t(6)A37) in tRNAs that read codons beginning with adenine. Is a component of the KEOPS complex that is probably involved in the transfer of the threonylcarbamoyl moiety of threonylcarbamoyl-AMP (TC-AMP) to the N6 group of A37. The Kae1 domain likely plays a direct catalytic role in this reaction. The Bud32 domain probably displays kinase activity that regulates Kae1 function. The polypeptide is Probable bifunctional tRNA threonylcarbamoyladenosine biosynthesis protein (Methanococcus maripaludis (strain C7 / ATCC BAA-1331)).